A 673-amino-acid chain; its full sequence is Glycine--tRNA ligase beta subunit (673 aa).

The protein belongs to the class-II aminoacyl-tRNA synthetase family. As to quaternary structure, tetramer of two alpha and two beta subunits.

Its subcellular location is the cytoplasm. The enzyme catalyses tRNA(Gly) + glycine + ATP = glycyl-tRNA(Gly) + AMP + diphosphate. The sequence is that of Glycine--tRNA ligase beta subunit from Lactococcus lactis subsp. cremoris (strain SK11).